The sequence spans 798 residues: Integrin beta-1 (798 aa).

An N-terminal signal peptide occupies residues Met1–Gly20. At Gln21 to Asp728 the chain is on the extracellular side. The PSI domain occupies Arg26–His76. Intrachain disulfides connect Cys27-Cys45, Cys35-Cys464, Cys38-Cys64, Cys48-Cys75, Cys207-Cys213, Cys261-Cys301, Cys401-Cys415, Cys435-Cys462, Cys466-Cys486, Cys477-Cys489, Cys491-Cys500, Cys502-Cys533, Cys516-Cys531, Cys525-Cys536, Cys538-Cys553, Cys555-Cys576, Cys560-Cys574, Cys568-Cys579, Cys581-Cys590, Cys592-Cys615, Cys599-Cys613, Cys607-Cys618, Cys620-Cys630, Cys633-Cys636, Cys640-Cys691, Cys646-Cys665, Cys649-Cys661, and Cys699-Cys723. An N-linked (GlcNAc...) asparagine glycan is attached at Asn50. Residues Cys75 to Arg84 show a composition bias toward basic and acidic residues. A disordered region spans residues Cys75–Gln107. 2 N-linked (GlcNAc...) asparagine glycosylation sites follow: Asn94 and Asn97. The VWFA domain occupies Asp140–Leu378. Mg(2+) is bound by residues Ser152 and Ser154. Positions 154, 157, 158, and 189 each coordinate Ca(2+). The interval Cys207–Cys213 is CX3CL1-binding. An N-linked (GlcNAc...) asparagine glycan is attached at Asn212. Ca(2+) contacts are provided by Asn244, Asp246, Pro248, and Glu249. Position 249 (Glu249) interacts with Mg(2+). An N-linked (GlcNAc...) asparagine glycan is attached at Asn269. A CX3CL1-binding region spans residues Leu295 to Tyr314. Residue Ala362 participates in Ca(2+) binding. Asn363, Asn406, and Asn417 each carry an N-linked (GlcNAc...) asparagine glycan. Residues Ile383–Glu465 form an interaction with TMEM182 region. I-EGF domains lie at Cys466–Glu501, Cys502–Glu554, Cys555–Asp591, and Cys592–Glu631. N-linked (GlcNAc...) asparagine glycosylation is present at Asn481. Asn520 is a glycosylation site (N-linked (GlcNAc...) asparagine). N-linked (GlcNAc...) asparagine glycosylation occurs at Asn584. N-linked (GlcNAc...) asparagine glycosylation occurs at Asn669. The helical transmembrane segment at Ile729–Leu749 threads the bilayer. Residues Ile750–Lys798 are Cytoplasmic-facing. The signal for sorting from recycling endosomes; interaction with ACAP1 stretch occupies residues Glu762–Glu767. A Phosphothreonine modification is found at Thr777. A Phosphotyrosine modification is found at Tyr783. Ser785 carries the post-translational modification Phosphoserine. The interaction with ITGB1BP1 stretch occupies residues Ser785–Asn792. Thr789 is modified (phosphothreonine). The residue at position 794 (Lys794) is an N6-acetyllysine; alternate. Lys794 participates in a covalent cross-link: Glycyl lysine isopeptide (Lys-Gly) (interchain with G-Cter in SUMO1); alternate.

Belongs to the integrin beta chain family. In terms of assembly, interacts with seprase FAP (seprase); the interaction occurs at the cell surface of invadopodia membrane in a collagen-dependent manner. Heterodimer of an alpha and a beta subunit. Beta-1 associates with either alpha-1, alpha-2, alpha-3, alpha-4, alpha-5, alpha-6, alpha-7, alpha-8, alpha-9, alpha-10, alpha-11 or alpha-V. ITGA6:ITGB1 is found in a complex with CD9; interaction takes place in oocytes and is involved in sperm-egg fusion. Binds LGALS3BP and NMRK2, when associated with alpha-7, but not with alpha-5. Interacts with FLNA, FLNB, FLNC and RANBP9. Interacts with KRT1 in the presence of RACK1 and SRC. Interacts with JAML; integrin alpha-4/beta-1 may regulate leukocyte to endothelial cells adhesion by controlling JAML homodimerization. Interacts with RAB21. Interacts (via the cytoplasmic region) with RAB25 (via the hypervariable C-terminal region). Interacts with MYO10. Interacts with ITGB1BP1 (via C-terminal region); the interaction is a prerequisite for focal adhesion disassembly. Interacts with TLN1; the interaction is prevented by competitive binding of ITGB1BP1. Interacts with ACAP1; required for ITGB1 recycling. Interacts with ASAP3. Interacts with FERMT2; the interaction is inhibited in presence of ITGB1BP1. Interacts with DAB2. Interacts with FGR and HCK. Interacts with alpha-7A and alpha-7B in adult skeletal muscle. Interacts with alpha-7B in cardiomyocytes of adult heart. Interacts with EMP2; the interaction may be direct or indirect and ITGB1 has a heterodimer form. ITGA5:ITGB1 interacts with CCN3. ITGA4:ITGB1 is found in a ternary complex with CX3CR1 and CX3CL1. ITGA5:ITGB1 interacts with FBN1. ITGA5:ITGB1 interacts with IL1B. Interacts with MDK. ITGA4:ITGB1 interacts with MDK; this interaction mediates MDK-induced osteoblast cells migration through PXN phosphorylation. ITGA6:ITGB1 interacts with MDK; this interaction mediates MDK-induced neurite-outgrowth. ITGA5:ITGB1 interacts with ACE2. Interacts with TMEM182 and LAMB1. Interacts with tensin TNS3; TNS3 also interacts with PEAK1, thus acting as an adapter molecule to bridge the association of PEAK1 with ITGB1. Interacts with tensin TNS4; the interaction displaces tensin TNS3 from the ITGB1 cytoplasmic tail and promotes ITGB1 stability. Integrin ITGA9:ITGB1 interacts with SPP1/OPN (via N-terminus). Integrin ITGA9:ITGB1 interacts with TNC/TNFN3 (via the 3rd Fibronectin type-III domain). Integrins ITGA4:ITGB1 and ITGA9:ITGB1 interact with SVEP1 (via Sushi domain 21); thereby inhibit Ca(2+) intracellular signaling and as a result repress vasocontraction. ITGA4:ITGB1 and ITGA5:ITGB1 interacts with SELP. Interacts with CD248. ITGA5:ITGB1 interacts with IGFBP1. ITGA4:ITGB1 interacts with BCAM. Interacts with ADGRG6. In terms of tissue distribution, expressed in the spleen, thymus, alveolar macrophages, bone marrow, liver and kidney.

Its subcellular location is the cell membrane. The protein localises to the cell projection. It is found in the invadopodium membrane. The protein resides in the ruffle membrane. It localises to the recycling endosome. Its subcellular location is the melanosome. The protein localises to the lamellipodium. It is found in the ruffle. The protein resides in the cell junction. It localises to the focal adhesion. In terms of biological role, integrins alpha-1/beta-1, alpha-2/beta-1, alpha-10/beta-1 and alpha-11/beta-1 are receptors for collagen. Integrins alpha-1/beta-1 and alpha-2/beta-2 recognize the proline-hydroxylated sequence G-F-P-G-E-R in collagen. Integrins alpha-2/beta-1, alpha-3/beta-1, alpha-4/beta-1, alpha-5/beta-1, alpha-8/beta-1, alpha-10/beta-1, alpha-11/beta-1 and alpha-V/beta-1 are receptors for fibronectin. Alpha-4/beta-1 recognizes one or more domains within the alternatively spliced CS-1 and CS-5 regions of fibronectin. Integrin alpha-5/beta-1 is a receptor for fibrinogen. Integrin alpha-1/beta-1, alpha-2/beta-1, alpha-6/beta-1 and alpha-7/beta-1 are receptors for lamimin. Integrin alpha-6/beta-1 (ITGA6:ITGB1) is present in oocytes and is involved in sperm-egg fusion. Integrin alpha-4/beta-1 is a receptor for VCAM1 and recognizes the sequence Q-I-D-S in VCAM1. Integrin alpha-9/beta-1 is a receptor for VCAM1, cytotactin and osteopontin. It recognizes the sequence A-E-I-D-G-I-E-L in cytotactin. Integrin alpha-3/beta-1 is a receptor for epiligrin, thrombospondin and CSPG4. Integrin alpha-3/beta-1 provides a docking site for FAP (seprase) at invadopodia plasma membranes in a collagen-dependent manner and hence may participate in the adhesion, formation of invadopodia and matrix degradation processes, promoting cell invasion. Alpha-3/beta-1 may mediate with LGALS3 the stimulation by CSPG4 of endothelial cells migration. Integrin alpha-V/beta-1 is a receptor for vitronectin. Beta-1 integrins recognize the sequence R-G-D in a wide array of ligands. When associated with alpha-7/beta-1 integrin, regulates cell adhesion and laminin matrix deposition. Involved in promoting endothelial cell motility and angiogenesis. Involved in osteoblast compaction through the fibronectin fibrillogenesis cell-mediated matrix assembly process and the formation of mineralized bone nodules. May be involved in up-regulation of the activity of kinases such as PKC via binding to KRT1. Together with KRT1 and RACK1, serves as a platform for SRC activation or inactivation. Plays a mechanistic adhesive role during telophase, required for the successful completion of cytokinesis. ITGA4:ITGB1 binds to fractalkine (CX3CL1) and may act as its coreceptor in CX3CR1-dependent fractalkine signaling. ITGA4:ITGB1 and ITGA5:ITGB1 bind to PLA2G2A via a site (site 2) which is distinct from the classical ligand-binding site (site 1) and this induces integrin conformational changes and enhanced ligand binding to site 1. ITGA5:ITGB1 acts as a receptor for fibrillin-1 (FBN1) and mediates R-G-D-dependent cell adhesion to FBN1. ITGA5:ITGB1 acts as a receptor for fibronectin FN1 and mediates R-G-D-dependent cell adhesion to FN1. ITGA5:ITGB1 is a receptor for IL1B and binding is essential for IL1B signaling. ITGA5:ITGB3 is a receptor for soluble CD40LG and is required for CD40/CD40LG signaling. Plays an important role in myoblast differentiation and fusion during skeletal myogenesis. ITGA9:ITGB1 may play a crucial role in SVEP1/polydom-mediated myoblast cell adhesion. Integrins ITGA9:ITGB1 and ITGA4:ITGB1 repress PRKCA-mediated L-type voltage-gated channel Ca(2+) influx and ROCK-mediated calcium sensitivity in vascular smooth muscle cells via their interaction with SVEP1, thereby inhibit vasocontraction. This is Integrin beta-1 (ITGB1) from Sus scrofa (Pig).